The sequence spans 507 residues: Fumarate hydratase, mitochondrial (507 aa).

Residues 1–41 constitute a mitochondrion transit peptide; sequence MNRAFCLLARSRRFPRVPSAGAVLSGEAATLPRCAPNVVRM. N6-acetyllysine; alternate is present on residues K58, K63, and K77. An N6-succinyllysine; alternate mark is found at K58, K63, and K77. A Phosphothreonine modification is found at T82. Position 91 is an N6-acetyllysine (K91). K112 and K119 each carry N6-acetyllysine; alternate. K112 and K119 each carry N6-succinyllysine; alternate. Substrate is bound by residues 142 to 144, 173 to 176, and 183 to 185; these read SGT, HPND, and SSN. At K210 the chain carries N6-acetyllysine. K220 is modified (N6-acetyllysine; alternate). K220 carries the N6-succinyllysine; alternate modification. T231 contacts substrate. H232 (proton donor/acceptor) is an active-site residue. At T233 the chain carries Phosphothreonine. Position 289 is an N6-acetyllysine; alternate (K289). K289 is modified (N6-succinyllysine; alternate). Residue S362 is part of the active site. Substrate is bound by residues S363 and 368 to 370; that span reads KVN. S363 bears the Phosphoserine mark. N6-succinyllysine is present on residues K464 and K470. At K499 the chain carries N6-acetyllysine.

Belongs to the class-II fumarase/aspartase family. Fumarase subfamily. Homotetramer. Interacts with H2AZ1. In terms of processing, phosphorylation at Thr-233 by PRKDC in response to DNA damage promotes translocation to the nucleus and recruitment to DNA double-strand breaks (DSBs).

It localises to the mitochondrion. Its subcellular location is the cytoplasm. The protein resides in the cytosol. The protein localises to the nucleus. It is found in the chromosome. The enzyme catalyses (S)-malate = fumarate + H2O. It functions in the pathway carbohydrate metabolism; tricarboxylic acid cycle; (S)-malate from fumarate: step 1/1. Functionally, catalyzes the reversible stereospecific interconversion of fumarate to L-malate. Experiments in other species have demonstrated that specific isoforms of this protein act in defined pathways and favor one direction over the other. Its function is as follows. Catalyzes the hydration of fumarate to L-malate in the tricarboxylic acid (TCA) cycle to facilitate a transition step in the production of energy in the form of NADH. In terms of biological role, catalyzes the dehydration of L-malate to fumarate. Fumarate metabolism in the cytosol plays a role during urea cycle and arginine metabolism; fumarate being a by-product of the urea cycle and amino-acid catabolism. Also plays a role in DNA repair by promoting non-homologous end-joining (NHEJ). In response to DNA damage and phosphorylation by PRKDC, translocates to the nucleus and accumulates at DNA double-strand breaks (DSBs): acts by catalyzing formation of fumarate, an inhibitor of KDM2B histone demethylase activity, resulting in enhanced dimethylation of histone H3 'Lys-36' (H3K36me2). The polypeptide is Fumarate hydratase, mitochondrial (Rattus norvegicus (Rat)).